The following is a 510-amino-acid chain: 2,3-bisphosphoglycerate-independent phosphoglycerate mutase (510 aa).

Residues D14 and S64 each contribute to the Mn(2+) site. The active-site Phosphoserine intermediate is S64. Substrate-binding positions include H125, 155–156 (RD), R187, R193, 259–262 (RADR), and K332. Positions 399, 403, 440, 441, and 459 each coordinate Mn(2+).

The protein belongs to the BPG-independent phosphoglycerate mutase family. In terms of assembly, monomer. Mn(2+) is required as a cofactor.

It carries out the reaction (2R)-2-phosphoglycerate = (2R)-3-phosphoglycerate. It functions in the pathway carbohydrate degradation; glycolysis; pyruvate from D-glyceraldehyde 3-phosphate: step 3/5. In terms of biological role, catalyzes the interconversion of 2-phosphoglycerate and 3-phosphoglycerate. Essential for the growth and pathogenicity on the host plant. The polypeptide is 2,3-bisphosphoglycerate-independent phosphoglycerate mutase (Pseudomonas syringae pv. tomato (strain ATCC BAA-871 / DC3000)).